The following is a 485-amino-acid chain: Ribosomal protein uS12 methylthiotransferase RimO (485 aa).

Residues 19 to 135 (VKVGFISLGC…IGEVVAGILA (117 aa)) form the MTTase N-terminal domain. Cys28, Cys64, Cys98, Cys172, Cys176, and Cys179 together coordinate [4Fe-4S] cluster. The region spanning 158–387 (ATPGYTAYLK…MEVQQEIARR (230 aa)) is the Radical SAM core domain. The region spanning 390–461 (QLQVGRELEV…DYDLLGEATE (72 aa)) is the TRAM domain.

The protein belongs to the methylthiotransferase family. RimO subfamily. [4Fe-4S] cluster is required as a cofactor.

The protein resides in the cytoplasm. It carries out the reaction L-aspartate(89)-[ribosomal protein uS12]-hydrogen + (sulfur carrier)-SH + AH2 + 2 S-adenosyl-L-methionine = 3-methylsulfanyl-L-aspartate(89)-[ribosomal protein uS12]-hydrogen + (sulfur carrier)-H + 5'-deoxyadenosine + L-methionine + A + S-adenosyl-L-homocysteine + 2 H(+). In terms of biological role, catalyzes the methylthiolation of an aspartic acid residue of ribosomal protein uS12. The chain is Ribosomal protein uS12 methylthiotransferase RimO from Symbiobacterium thermophilum (strain DSM 24528 / JCM 14929 / IAM 14863 / T).